Consider the following 490-residue polypeptide: Costunolide synthase (490 aa).

A helical; Signal-anchor for type II membrane protein transmembrane segment spans residues 3–23 (PLTIVSLAVASFLLFAFWALS). N-linked (GlcNAc...) asparagine glycans are attached at residues Asn167 and Asn255. Cys432 is a heme binding site.

It belongs to the cytochrome P450 family. Heme serves as cofactor.

The protein resides in the membrane. It catalyses the reaction germacra-1(10),4,11(13)-trien-12-oate + reduced [NADPH--hemoprotein reductase] + O2 = (+)-costunolide + oxidized [NADPH--hemoprotein reductase] + 2 H2O. It functions in the pathway secondary metabolite biosynthesis; terpenoid biosynthesis. Involved in the biosynthesis of germacrene-derived sesquiterpene lactones. Component of the parthenolide biosynthetic pathway; parthenolide and conjugates are promising anti-cancer drugs highly active against colon cancer cells. Hydroxylates germacrene A acid to 6-alpha-hydroxy-germacrne A acid, a precursor of sesquiterpene lactones that spontaneously undergoes a lactonization which yields costunolide. The chain is Costunolide synthase from Lactuca sativa (Garden lettuce).